The following is a 329-amino-acid chain: tRNA N6-adenosine threonylcarbamoyltransferase (329 aa).

H110 and H114 together coordinate Fe cation. Substrate contacts are provided by residues 132–136, D165, G178, and N271; that span reads VISGG. D299 contributes to the Fe cation binding site.

It belongs to the KAE1 / TsaD family. It depends on Fe(2+) as a cofactor.

The protein localises to the cytoplasm. It catalyses the reaction L-threonylcarbamoyladenylate + adenosine(37) in tRNA = N(6)-L-threonylcarbamoyladenosine(37) in tRNA + AMP + H(+). Required for the formation of a threonylcarbamoyl group on adenosine at position 37 (t(6)A37) in tRNAs that read codons beginning with adenine. Is involved in the transfer of the threonylcarbamoyl moiety of threonylcarbamoyl-AMP (TC-AMP) to the N6 group of A37, together with TsaE and TsaB. TsaD likely plays a direct catalytic role in this reaction. In Neorickettsia sennetsu (strain ATCC VR-367 / Miyayama) (Ehrlichia sennetsu), this protein is tRNA N6-adenosine threonylcarbamoyltransferase.